Here is an 815-residue protein sequence, read N- to C-terminus: Probable oligoxyloglucan-reducing end-specific xyloglucanase (815 aa).

Residues 1–19 (MKFWLQQLGLAVLCASSAA) form the signal peptide. The active-site Nucleophile is the aspartate 58. Residue asparagine 113 is glycosylated (N-linked (GlcNAc...) asparagine). The BNR 1 repeat unit spans residues 118–128 (FVSNDRGATFT). Residue asparagine 180 is glycosylated (N-linked (GlcNAc...) asparagine). The stretch at 218–228 (YYTTDGGKNWE) is one BNR 2 repeat. Asparagine 246, asparagine 290, and asparagine 304 each carry an N-linked (GlcNAc...) asparagine glycan. A BNR 3 repeat occupies 351–361 (YLSRDGGKTWK). The N-linked (GlcNAc...) asparagine glycan is linked to asparagine 387. Aspartate 489 acts as the Proton donor in catalysis. One copy of the BNR 4 repeat lies at 545 to 555 (YSTDGGSEWTK). Asparagine 564 and asparagine 603 each carry an N-linked (GlcNAc...) asparagine glycan. One copy of the BNR 5 repeat lies at 649–658 (YVSTDGGLSY). Residue asparagine 662 is glycosylated (N-linked (GlcNAc...) asparagine). BNR repeat units lie at residues 696–706 (YHTTDFGKRWK) and 749–759 (YRSDDNGSTWD). The N-linked (GlcNAc...) asparagine glycan is linked to asparagine 754.

It belongs to the glycosyl hydrolase 74 family.

The protein resides in the secreted. It carries out the reaction Hydrolysis of cellobiose from the reducing end of xyloglucans consisting of a beta-(1-&gt;4)-linked glucan carrying alpha-D-xylosyl groups on O-6 of the glucose residues. To be a substrate, the first residue must be unsubstituted, the second residue may bear a xylosyl group, whether further glycosylated or not, and the third residue, which becomes the new terminus by the action of the enzyme, is preferably xylosylated, but this xylose residue must not be further substituted.. Functionally, oligoxyloglucan-reducing end-specific xyloglucanase involved in degradation of xyloglucans. Releases the first two glycosyl segments from oligoxyloglucans. Active against cotton xyloglucan, tamarind xyloglucan and tamarind xyloglucan oligomers. The protein is Probable oligoxyloglucan-reducing end-specific xyloglucanase (xgcA) of Neosartorya fischeri (strain ATCC 1020 / DSM 3700 / CBS 544.65 / FGSC A1164 / JCM 1740 / NRRL 181 / WB 181) (Aspergillus fischerianus).